Here is a 317-residue protein sequence, read N- to C-terminus: Malate dehydrogenase (317 aa).

Residues 10–15 (GGGQIG) and Asp-34 contribute to the NAD(+) site. Positions 83 and 89 each coordinate substrate. NAD(+)-binding positions include Asn-96 and 119 to 121 (ISN). Substrate-binding residues include Asn-121 and Arg-152. His-176 (proton acceptor) is an active-site residue.

The protein belongs to the LDH/MDH superfamily. MDH type 3 family.

It catalyses the reaction (S)-malate + NAD(+) = oxaloacetate + NADH + H(+). In terms of biological role, catalyzes the reversible oxidation of malate to oxaloacetate. This is Malate dehydrogenase from Geobacter metallireducens (strain ATCC 53774 / DSM 7210 / GS-15).